The primary structure comprises 432 residues: Diaminopimelate decarboxylase (432 aa).

Lys-66 is modified (N6-(pyridoxal phosphate)lysine). Pyridoxal 5'-phosphate-binding positions include Gly-248 and 290 to 293 (EPGR). Arg-293, Arg-330, and Tyr-334 together coordinate substrate. The active-site Proton donor is Cys-361. Residues Glu-362 and Tyr-390 each contribute to the substrate site. Residue Tyr-390 participates in pyridoxal 5'-phosphate binding.

The protein belongs to the Orn/Lys/Arg decarboxylase class-II family. LysA subfamily. As to quaternary structure, homodimer. It depends on pyridoxal 5'-phosphate as a cofactor.

The catalysed reaction is meso-2,6-diaminopimelate + H(+) = L-lysine + CO2. It functions in the pathway amino-acid biosynthesis; L-lysine biosynthesis via DAP pathway; L-lysine from DL-2,6-diaminopimelate: step 1/1. Specifically catalyzes the decarboxylation of meso-diaminopimelate (meso-DAP) to L-lysine. The sequence is that of Diaminopimelate decarboxylase from Bacillus methanolicus.